Consider the following 187-residue polypeptide: Ribosome-recycling factor (187 aa).

The protein belongs to the RRF family.

It is found in the cytoplasm. Its function is as follows. Responsible for the release of ribosomes from messenger RNA at the termination of protein biosynthesis. May increase the efficiency of translation by recycling ribosomes from one round of translation to another. The sequence is that of Ribosome-recycling factor from Roseobacter denitrificans (strain ATCC 33942 / OCh 114) (Erythrobacter sp. (strain OCh 114)).